The following is a 305-amino-acid chain: Syntaxin-123 (305 aa).

Met-1 is subject to N-acetylmethionine. The Cytoplasmic portion of the chain corresponds to 1–278 (MNDLISSSFK…KVLQRNNRKW (278 aa)). Residues 46–66 (VKEDMKAVDEIHKRLQDANEE) are a coiled coil. In terms of domain architecture, t-SNARE coiled-coil homology spans 206–268 (LSEIQERHDT…MRGTDQLHGA (63 aa)). A helical; Anchor for type IV membrane protein membrane pass occupies residues 279–299 (ACIATILAIVVVIVILFPILF). Over 300–305 (NTLLRP) the chain is Vesicular.

Belongs to the syntaxin family. As to quaternary structure, part of the t-SNARE complex. As to expression, expressed in tips of root hairs.

Its subcellular location is the membrane. Functionally, vesicle trafficking protein that functions in the secretory pathway. Acts in coordination with SYP132 to mediate tip-focused membrane trafficking for root hair tip growth. Functions in root hair elongation by forming SNARE complexes with VAMP721,VAMP722 or VAMP724. This is Syntaxin-123 from Arabidopsis thaliana (Mouse-ear cress).